The chain runs to 856 residues: Protein phosphatase 2C 32 (856 aa).

Phosphoserine is present on residues Ser-152, Ser-189, and Ser-201. In terms of domain architecture, PPM-type phosphatase spans 269–835 (ESCLESNRNL…DDVSVMVVSL (567 aa)). Mn(2+) contacts are provided by Asp-307 and Gly-308. Disordered regions lie at residues 340 to 373 (PSED…KSVV), 388 to 407 (GNTD…GPGK), and 446 to 485 (NPST…QISS). The span at 395–407 (ADGPPGDSAGPGK) shows a compositional bias: low complexity. Residues 471–485 (NSGQRHGTKKSQISS) are compositionally biased toward polar residues. Mn(2+) contacts are provided by Asp-763 and Asp-826.

The protein belongs to the PP2C family. Mg(2+) serves as cofactor. The cofactor is Mn(2+). Expressed in roots, leaves, stems, inflorescences, flowers and throughout the shoot meristem.

The protein localises to the nucleus. It catalyses the reaction O-phospho-L-seryl-[protein] + H2O = L-seryl-[protein] + phosphate. The catalysed reaction is O-phospho-L-threonyl-[protein] + H2O = L-threonyl-[protein] + phosphate. With respect to regulation, insensitive to okadaic acid. In terms of biological role, involved in the regulation of pedicel length and of CLAVATA pathways controlling stem cell identity at shoot and flower meristems. This is Protein phosphatase 2C 32 (POL) from Arabidopsis thaliana (Mouse-ear cress).